A 356-amino-acid polypeptide reads, in one-letter code: Adenine deaminase (356 aa).

Residues His23, His25, and His211 each coordinate Zn(2+). The Proton donor role is filled by Glu214. Asp292 is a Zn(2+) binding site. Residue Asp293 participates in substrate binding.

Belongs to the metallo-dependent hydrolases superfamily. Adenosine and AMP deaminases family. Adenine deaminase type 2 subfamily. The cofactor is Zn(2+).

It localises to the cytoplasm. It is found in the nucleus. It catalyses the reaction adenine + H2O + H(+) = hypoxanthine + NH4(+). Its function is as follows. Catalyzes the hydrolytic deamination of adenine to hypoxanthine. Plays an important role in the purine salvage pathway and in nitrogen catabolism. The polypeptide is Adenine deaminase (Candida albicans (strain SC5314 / ATCC MYA-2876) (Yeast)).